Reading from the N-terminus, the 475-residue chain is Putative aldehyde dehydrogenase SH0913 (475 aa).

201–207 contributes to the NAD(+) binding site; sequence GDGEGVG. Active-site residues include E245 and C279.

It belongs to the aldehyde dehydrogenase family.

The catalysed reaction is an aldehyde + NAD(+) + H2O = a carboxylate + NADH + 2 H(+). The chain is Putative aldehyde dehydrogenase SH0913 from Staphylococcus haemolyticus (strain JCSC1435).